The primary structure comprises 725 residues: Polyribonucleotide nucleotidyltransferase (725 aa).

Mg(2+) contacts are provided by Asp-488 and Asp-494. The 60-residue stretch at 555–614 (PRMITMKIHPDKIREVIGKGGSTIQALTKETGTTIDIQEDGTITIASTSTDGMAEAKRRI) folds into the KH domain. In terms of domain architecture, S1 motif spans 624–692 (GKIYAGTVLK…EKGRLRLSLK (69 aa)). The interval 702-725 (ISPIAQGDAPAAAPAAPASPDQQQ) is disordered. The segment covering 706 to 725 (AQGDAPAAAPAAPASPDQQQ) has biased composition (low complexity).

The protein belongs to the polyribonucleotide nucleotidyltransferase family. Mg(2+) serves as cofactor.

It localises to the cytoplasm. It carries out the reaction RNA(n+1) + phosphate = RNA(n) + a ribonucleoside 5'-diphosphate. Its function is as follows. Involved in mRNA degradation. Catalyzes the phosphorolysis of single-stranded polyribonucleotides processively in the 3'- to 5'-direction. This Cupriavidus metallidurans (strain ATCC 43123 / DSM 2839 / NBRC 102507 / CH34) (Ralstonia metallidurans) protein is Polyribonucleotide nucleotidyltransferase.